The sequence spans 280 residues: Diaminopimelate epimerase (280 aa).

2 residues coordinate substrate: asparagine 13 and asparagine 67. Cysteine 76 functions as the Proton donor in the catalytic mechanism. Residues glycine 77–asparagine 78, asparagine 191, and glutamate 208–arginine 209 each bind substrate. The Proton acceptor role is filled by cysteine 218. Residue glycine 219 to threonine 220 participates in substrate binding.

This sequence belongs to the diaminopimelate epimerase family. In terms of assembly, homodimer.

It is found in the cytoplasm. The catalysed reaction is (2S,6S)-2,6-diaminopimelate = meso-2,6-diaminopimelate. The protein operates within amino-acid biosynthesis; L-lysine biosynthesis via DAP pathway; DL-2,6-diaminopimelate from LL-2,6-diaminopimelate: step 1/1. Functionally, catalyzes the stereoinversion of LL-2,6-diaminopimelate (L,L-DAP) to meso-diaminopimelate (meso-DAP), a precursor of L-lysine. The polypeptide is Diaminopimelate epimerase (Archaeoglobus fulgidus (strain ATCC 49558 / DSM 4304 / JCM 9628 / NBRC 100126 / VC-16)).